Here is a 766-residue protein sequence, read N- to C-terminus: LPS-assembly protein LptD (766 aa).

A signal peptide spans 1 to 18; that stretch reads MNIRYLLLLSLMPHLVWA.

Belongs to the LptD family. Component of the lipopolysaccharide transport and assembly complex. Interacts with LptE and LptA.

It localises to the cell outer membrane. Together with LptE, is involved in the assembly of lipopolysaccharide (LPS) at the surface of the outer membrane. This Shewanella denitrificans (strain OS217 / ATCC BAA-1090 / DSM 15013) protein is LPS-assembly protein LptD.